A 317-amino-acid polypeptide reads, in one-letter code: Melanocyte-stimulating hormone receptor (317 aa).

Topologically, residues 1–37 (MPMQGAQRKLLGSLNSTPTATSNLGLAANHTGAPCLE) are extracellular. N29 carries N-linked (GlcNAc...) asparagine glycosylation. The chain crosses the membrane as a helical span at residues 38–63 (VSIPDGLFLSLGLVSLVENVLVVAAV). The Cytoplasmic segment spans residues 64 to 72 (AKNRNLHSS). The helical transmembrane segment at 73-93 (MYCFICCLALSDLLVSGSNML) threads the bilayer. Residues 94–118 (ETAVILLLETGALATRTSVVQQLHN) are Extracellular-facing. Residues 119–140 (TINVLTCSSMLCSLCFLGAIAV) traverse the membrane as a helical segment. Topologically, residues 141–163 (DRYISIFYALRYHSIMTLPRAQR) are cytoplasmic. The helical transmembrane segment at 164–183 (AIAAIWVASVLSSTLFITYY) threads the bilayer. Topologically, residues 184–191 (DHAAVLLC) are extracellular. The helical transmembrane segment at 192–211 (LVVFFLAMLVLMAVLYVHML) threads the bilayer. Over 212–240 (ARACQHAHGIIRLHKRQTPAHQGFGLRGA) the chain is Cytoplasmic. Residues 241–266 (ATLTILLGIFFLCWGPFFLHLTLVVF) traverse the membrane as a helical segment. Topologically, residues 267–279 (CPQHLTCSCIFKN) are extracellular. A helical membrane pass occupies residues 280-300 (FKVFLTLIICNTIIDPLIYAF). The Cytoplasmic portion of the chain corresponds to 301 to 317 (RSQELRRTLKEVLLCSW). C315 carries S-palmitoyl cysteine lipidation.

Belongs to the G-protein coupled receptor 1 family. In terms of assembly, interacts with MGRN1, but does not undergo MGRN1-mediated ubiquitination; this interaction competes with GNAS-binding and thus inhibits agonist-induced cAMP production. Interacts with OPN3; the interaction results in a decrease in MC1R-mediated cAMP signaling and ultimately a decrease in melanin production in melanocytes.

The protein localises to the cell membrane. Its function is as follows. Receptor for MSH (alpha, beta and gamma) and ACTH. The activity of this receptor is mediated by G proteins which activate adenylate cyclase. Mediates melanogenesis, the production of eumelanin (black/brown) and phaeomelanin (red/yellow), via regulation of cAMP signaling in melanocytes. The sequence is that of Melanocyte-stimulating hormone receptor (MC1R) from Saguinus oedipus (Cotton-top tamarin).